Consider the following 1155-residue polypeptide: MLQQYTLLLIYLSVATAKTITGVFNSFNSLTWSNAATYNYKGPGTPTWNAVLGWSLDGTSASPGDTFTLNMPCVFKFTTSQTSVDLTAHGVKYATCQFQAGEEFMTFSTLTCTVSNTLTPSIKALGTVTLPLAFNVGGTGSSVDLEDSKCFTAGTNTVTFNDGGKKISINVDFERSNVDPKGYLTDSRVIPSLNKVSTLFVAPQCANGYTSGTMGFANTYGDVQIDCSNIHVGITKGLNDWNYPVSSESFSYTKTCSSNGIFITYKNVPAGYRPFVDAYISATDVNSYTLSYANEYTCAGGYWQRAPFTLRWTGYRNSDAGSNGIVIVATTRTVTDSTTAVTTLPFDPNRDKTKTIEILKPIPTTTITTSYVGVTTSYSTKTAPIGETATVIVDIPYHTTTTVTSKWTGTITSTTTHTNPTDSIDTVIVQVPSPNPTVTTTEYWSQSFATTTTITGPPGNTDTVLIREPPNHTVTTTEYWSESYTTTSTFTAPPGGTDSVIIKEPPNPTVTTTEYWSESYTTTTTVTAPPGGTDTVIIREPPNHTVTTTEYWSQSYTTTTTVIAPPGGTDSVIIREPPNPTVTTTEYWSQSYATTTTITAPPGETDTVLIREPPNHTVTTTEYWSQSYATTTTITAPPGETDTVLIREPPNHTVTTTEYWSQSYTTTTTVIAPPGGTDSVIIKEPPNPTVTTTEYWSQSYATTTTITAPPGETDTVLIREPPNHTVTTTEYWSQSYATTTTITAPPGETDTVLIREPPNHTVTTTEYWSQSFATTTTVTAPPGGTDTVIIREPPNHTVTTTEYWSQSFATTTTIIAPPGETDTVLIREPPNPTVTTTEYWSQSYTTATTVTAPPGGTDTVIIYDTMSSSEISSFSRPHYTNHTTLWSTTWVIETKTITETSCEGDKGCSWVSVSTRIVTIPNNIETPMVTNTVDTTTTESTLQSPSGIFSESGVSVETESSTFTTAQTNPSVPTTESEVVFTTKGNNGNGPYESPSTNVKSSMDENSEFTTSTAASTSTDIENETIATTGSVEASSPIISSSADETTTVTTTAESTSVIEQQTNNNGGGNAPSATSTSSPSTTTTANSDSVITSTTSTNQSQSQSNSDTQQTTLSQQMTSSLVSLHMLTTFDGSGSVIQHSTWLCGLITLLSLFI.

Positions 1–17 (MLQQYTLLLIYLSVATA) are cleaved as a signal peptide. 4 disulfides stabilise this stretch: Cys73–Cys150, Cys96–Cys112, Cys205–Cys298, and Cys227–Cys256. ALS repeat units lie at residues 365-396 (TTIT…VDIP), 401-432 (TTVT…VQVP), and 438-469 (VTTT…IREP). Residue Asn471 is glycosylated (N-linked (GlcNAc...) asparagine). ALS repeat units follow at residues 474–505 (VTTT…IKEP) and 510–541 (VTTT…IREP). An N-linked (GlcNAc...) asparagine glycan is attached at Asn543. 2 ALS repeats span residues 546–577 (VTTT…IREP) and 582–613 (VTTT…IREP). N-linked (GlcNAc...) asparagine glycosylation occurs at Asn615. The stretch at 618–649 (VTTTEYWSQSYATTTTITAPPGETDTVLIREP) is one ALS 8 repeat. N-linked (GlcNAc...) asparagine glycosylation is present at Asn651. 2 ALS repeats span residues 654–685 (VTTT…IKEP) and 690–721 (VTTT…IREP). The N-linked (GlcNAc...) asparagine glycan is linked to Asn723. The stretch at 726-757 (VTTTEYWSQSYATTTTITAPPGETDTVLIREP) is one ALS 11 repeat. A glycan (N-linked (GlcNAc...) asparagine) is linked at Asn759. The ALS 12 repeat unit spans residues 762-793 (VTTTEYWSQSFATTTTVTAPPGGTDTVIIREP). The N-linked (GlcNAc...) asparagine glycan is linked to Asn795. ALS repeat units follow at residues 798–829 (VTTT…IREP) and 834–863 (VTTT…VIIY). Residue Asn881 is glycosylated (N-linked (GlcNAc...) asparagine). The disordered stretch occupies residues 936-1115 (TTTESTLQSP…NSDTQQTTLS (180 aa)). The segment covering 949-965 (FSESGVSVETESSTFTT) has biased composition (low complexity). A compositionally biased stretch (polar residues) spans 966-977 (AQTNPSVPTTES). Low complexity predominate over residues 1010 to 1019 (TTSTAASTST). N-linked (GlcNAc...) asparagine glycosylation is present at Asn1023. Composition is skewed to low complexity over residues 1034–1058 (ASSP…STSV) and 1071–1115 (APSA…TTLS). An N-linked (GlcNAc...) asparagine glycan is attached at Asn1099. A lipid anchor (GPI-anchor amidated serine) is attached at Ser1134. A propeptide spans 1135–1155 (GSVIQHSTWLCGLITLLSLFI) (removed in mature form).

Belongs to the ALS family. Post-translationally, the GPI-anchor is attached to the protein in the endoplasmic reticulum and serves to target the protein to the cell surface. There, the glucosamine-inositol phospholipid moiety is cleaved off and the GPI-modified mannoprotein is covalently attached via its lipidless GPI glycan remnant to the 1,6-beta-glucan of the outer cell wall layer.

Its subcellular location is the cell membrane. The protein resides in the secreted. It is found in the cell wall. Cell surface adhesion protein which mediates both yeast-to-host tissue adherence and yeast aggregation. Plays an important role in the biofilm formation and pathogenesis of C.albicans infections. Necessary for C.albicans to bind to N-cadherin on endothelial cells and E-cadherin on oral epithelial cells and subsequent endocytosis by these cells. During disseminated infection, mediates initial trafficking to the brain and renal cortex and contributes to fungal persistence in the kidneys. In Candida albicans (strain SC5314 / ATCC MYA-2876) (Yeast), this protein is Agglutinin-like protein 3 (ALS3).